The chain runs to 353 residues: uncharacterized protein (353 aa).

A helical transmembrane segment spans residues Gly267–Cys287.

Belongs to the glycosyltransferase group 1 family. Glycosyltransferase 4 subfamily.

The protein localises to the membrane. This is an uncharacterized protein from Haemophilus influenzae (strain ATCC 51907 / DSM 11121 / KW20 / Rd).